A 354-amino-acid polypeptide reads, in one-letter code: Membrane progestin receptor beta (354 aa).

At 1 to 75 the chain is on the cytoplasmic side; sequence MTTAILQRLS…FFSLFQKHNE (75 aa). The chain crosses the membrane as a helical span at residues 76 to 96; the sequence is VVNVWTHLLAALAVLLRFWAF. The Extracellular portion of the chain corresponds to 97–111; that stretch reads VETEGLPWTSAHTLP. The helical transmembrane segment at 112-132 threads the bilayer; the sequence is LLLYVLSSITYLTFSLLAHLL. Residues 133 to 174 lie on the Cytoplasmic side of the membrane; sequence QSKSELSHYTFYFVDYVGVSVYQYGSALVHFFYASDQAWYER. A helical membrane pass occupies residues 175 to 195; sequence FWLFFLPAAAFCGWLSCTGCC. Residues 196–213 lie on the Extracellular side of the membrane; that stretch reads YAKYRYRRPYPVMRKVCQ. The chain crosses the membrane as a helical span at residues 214-234; that stretch reads VVPAGLAFILDISPVAHRVAL. The Cytoplasmic segment spans residues 235–243; sequence CHLSGCQEQ. Residues 244–264 traverse the membrane as a helical segment; that stretch reads AAWYHTLQIVFFLVSAYFFSC. The Extracellular portion of the chain corresponds to 265–283; that stretch reads PVPEKYFPGSCDIVGHGHQ. The helical transmembrane segment at 284–304 threads the bilayer; it reads IFHAFLSICTLSQLEAILLDY. Topologically, residues 305-319 are cytoplasmic; that stretch reads KGRQEIFLHRHSPLS. The chain crosses the membrane as a helical span at residues 320–340; sequence IYAACLSFFFLVACSGATAAL. At 341 to 354 the chain is on the extracellular side; the sequence is LREKIKARLSKKDS.

It belongs to the ADIPOR family.

The protein localises to the cell membrane. Functionally, steroid membrane receptor. Binds progesterone. May be involved in oocyte maturation. This chain is Membrane progestin receptor beta (PAQR8), found in Sus scrofa (Pig).